A 109-amino-acid chain; its full sequence is SIAFSRAVFAEFLATLIFVFFGLGSALNWQQSLPSVLQIAMAFGLAIGTLVQALGHISGAHINPAVTVACLVGCHVSFLRAAFYVAAQLLGAVAGAALLHEVTPSDVRG.

The Cytoplasmic segment spans residues 1 to 6 (SIAFSR). The helical transmembrane segment at 7-27 (AVFAEFLATLIFVFFGLGSAL) threads the bilayer. The Extracellular segment spans residues 28–35 (NWQQSLPS). A helical transmembrane segment spans residues 36 to 54 (VLQIAMAFGLAIGTLVQAL). Residues 55–59 (GHISG) lie on the Cytoplasmic side of the membrane. The segment at residues 60–69 (AHINPAVTVA) is an intramembrane region (discontinuously helical). Residues 63–65 (NPA) carry the NPA 1 motif. The Cytoplasmic portion of the chain corresponds to 70-80 (CLVGCHVSFLR). The chain crosses the membrane as a helical span at residues 81 to 102 (AAFYVAAQLLGAVAGAALLHEV). The Extracellular portion of the chain corresponds to 103-109 (TPSDVRG).

The protein belongs to the MIP/aquaporin (TC 1.A.8) family. In terms of assembly, homotetramer. Serine phosphorylation is necessary and sufficient for expression at the apical membrane. Endocytosis is not phosphorylation-dependent. In terms of processing, N-glycosylated.

The protein localises to the apical cell membrane. Its subcellular location is the basolateral cell membrane. It is found in the cell membrane. It localises to the cytoplasmic vesicle membrane. The protein resides in the golgi apparatus. The protein localises to the trans-Golgi network membrane. The catalysed reaction is H2O(in) = H2O(out). It catalyses the reaction glycerol(in) = glycerol(out). Forms a water-specific channel that provides the plasma membranes of renal collecting duct with high permeability to water, thereby permitting water to move in the direction of an osmotic gradient. Plays an essential role in renal water homeostasis. Could also be permeable to glycerol. The protein is Aquaporin-2 of Talpa europaea (European mole).